The primary structure comprises 91 residues: Small integral membrane protein 12-A (91 aa).

Residues 12–34 traverse the membrane as a helical segment; sequence YAPYITFPVAFVVGAVGYQLEWF.

This sequence belongs to the SMIM12 family.

The protein localises to the membrane. This chain is Small integral membrane protein 12-A (smim12-a), found in Xenopus laevis (African clawed frog).